A 724-amino-acid chain; its full sequence is Probable serine/threonine-protein kinase KKQ8 (724 aa).

2 disordered regions span residues methionine 1–serine 81 and histidine 93–leucine 188. Residue serine 19 is modified to Phosphoserine. Residues proline 45–lysine 54 are compositionally biased toward low complexity. Residues phenylalanine 95–proline 106 show a composition bias toward polar residues. A compositionally biased stretch (low complexity) spans arginine 143–serine 162. Phosphoserine occurs at positions 232, 238, and 241. Polar residues-rich tracts occupy residues asparagine 318–serine 329 and glycine 338–glutamine 351. The tract at residues asparagine 318–aspartate 355 is disordered. Positions glycine 412–methionine 712 constitute a Protein kinase domain. Residues valine 418–valine 426 and lysine 455 contribute to the ATP site. The active-site Proton acceptor is the aspartate 563.

It belongs to the protein kinase superfamily. CAMK Ser/Thr protein kinase family. NPR/HAL subfamily. HAL5 sub-subfamily.

The protein localises to the cytoplasm. The enzyme catalyses L-seryl-[protein] + ATP = O-phospho-L-seryl-[protein] + ADP + H(+). It catalyses the reaction L-threonyl-[protein] + ATP = O-phospho-L-threonyl-[protein] + ADP + H(+). This chain is Probable serine/threonine-protein kinase KKQ8 (KKQ8), found in Saccharomyces cerevisiae (strain YJM789) (Baker's yeast).